The chain runs to 491 residues: Serine/threonine-protein kinase 3/4 (491 aa).

The tract at residues 1-24 is disordered; it reads MEEVQRRQHPHPRRSLKKLSEDSL. A compositionally biased stretch (basic residues) spans 7-17; sequence RQHPHPRRSLK. The Protein kinase domain maps to 32 to 283; sequence FDVLEKLGEG…ATQLLQHPFI (252 aa). Residues 38 to 46 and K61 each bind ATP; that span reads LGEGSYGSV. The Proton acceptor role is filled by D151. The residue at position 185 (T185) is a Phosphothreonine; by autocatalysis. A coiled-coil region spans residues 292-334; the sequence is LRDLITDMMEIKLKRQEEQQRDLDQDDEENSEEDDMDSGTMVR. 2 disordered regions span residues 307–394 and 406–435; these read QEEQ…IQQS and EKEN…PQDG. The segment covering 315–328 has biased composition (acidic residues); it reads DQDDEENSEEDDMD. Polar residues-rich tracts occupy residues 363-373 and 410-428; these read TLDSQMGTMVI and QANS…SSDN. One can recognise an SARAH domain in the interval 437–484; the sequence is FESLKSWSVEELQRRLASLDPTMEQEIEEIRQRYQAKRQPILDAIDAK. A coiled-coil region spans residues 442-475; that stretch reads SWSVEELQRRLASLDPTMEQEIEEIRQRYQAKRQ.

Belongs to the protein kinase superfamily. STE Ser/Thr protein kinase family. STE20 subfamily. In terms of assembly, homodimer; mediated via the coiled-coil region. Mg(2+) serves as cofactor. Proteolytically cleaved by caspase-3 during apoptosis at Asp-328 resulting in a 37 kDa form. Proteolytic cleavage results in kinase activation and nuclear translocation of the truncated form (MST1/N).

It localises to the cytoplasm. Its subcellular location is the nucleus. The enzyme catalyses L-seryl-[protein] + ATP = O-phospho-L-seryl-[protein] + ADP + H(+). The catalysed reaction is L-threonyl-[protein] + ATP = O-phospho-L-threonyl-[protein] + ADP + H(+). With respect to regulation, inhibited by the C-terminal non-catalytic region. Activated by caspase-cleavage. Full activation also requires homodimerization and autophosphorylation of Thr-185. Its function is as follows. Stress-activated, pro-apoptotic kinase which, following caspase-cleavage, enters the nucleus and induces chromatin condensation followed by internucleosomal DNA fragmentation. Key component of the Hippo signaling pathway which plays a pivotal role in organ size control and tumor suppression by restricting proliferation and promoting apoptosis. The core of this pathway is composed of a kinase cascade wherein stk3/mst2 and stk4/mst1, in complex with its regulatory protein sav1, phosphorylates and activates lats1/2 in complex with its regulatory protein mob1, which in turn phosphorylates and inactivates yap1 oncoprotein and wwtr1/taz. Phosphorylation of yap1 by lats2 inhibits its translocation into the nucleus to regulate cellular genes important for cell proliferation, cell death, and cell migration. Phosphorylates 'Ser-14' of histone H2B (H2BS14ph) during apoptosis. This Squalus acanthias (Spiny dogfish) protein is Serine/threonine-protein kinase 3/4 (STK4).